A 594-amino-acid polypeptide reads, in one-letter code: Potassium-transporting ATPase potassium-binding subunit (594 aa).

The next 10 membrane-spanning stretches (helical) occupy residues 3 to 23, 67 to 87, 136 to 156, 179 to 199, 287 to 307, 314 to 334, 415 to 435, 453 to 473, 519 to 539, and 562 to 582; these read ADFLGLLLLYLAILLCAAPLL, AVAMLVFNVLGVLAVYALQRL, ALTVQNFVSAATGIAVLIALV, LYVLLPLSFILALALVSQGVV, LEMLAILLIPAALCWTFGEMV, VAILAAMTVLFAGFAASAAYF, GLYGMLAFAILAVFIAGLMIG, VALVILATPALVLAGTAVAVL, VLLGLAMWFGRYTIIVAILAL, and LFVALLVGAVLLVGALTYVPA.

It belongs to the KdpA family. As to quaternary structure, the system is composed of three essential subunits: KdpA, KdpB and KdpC.

The protein resides in the cell inner membrane. Part of the high-affinity ATP-driven potassium transport (or Kdp) system, which catalyzes the hydrolysis of ATP coupled with the electrogenic transport of potassium into the cytoplasm. This subunit binds the periplasmic potassium ions and delivers the ions to the membrane domain of KdpB through an intramembrane tunnel. The protein is Potassium-transporting ATPase potassium-binding subunit of Bordetella pertussis (strain Tohama I / ATCC BAA-589 / NCTC 13251).